Reading from the N-terminus, the 520-residue chain is Glucose-6-phosphate isomerase (520 aa).

The Proton donor role is filled by glutamate 327. Active-site residues include histidine 358 and lysine 486.

The protein belongs to the GPI family.

It is found in the cytoplasm. The catalysed reaction is alpha-D-glucose 6-phosphate = beta-D-fructose 6-phosphate. Its pathway is carbohydrate biosynthesis; gluconeogenesis. It functions in the pathway carbohydrate degradation; glycolysis; D-glyceraldehyde 3-phosphate and glycerone phosphate from D-glucose: step 2/4. Its function is as follows. Catalyzes the reversible isomerization of glucose-6-phosphate to fructose-6-phosphate. The polypeptide is Glucose-6-phosphate isomerase (Bordetella avium (strain 197N)).